A 415-amino-acid polypeptide reads, in one-letter code: Multidrug resistance protein MdtA (415 aa).

A signal peptide spans M1–A21. Residues D31–P47 show a composition bias toward polar residues. Disordered regions lie at residues D31 to A56 and V390 to S415. Over residues P399–S415 the composition is skewed to basic and acidic residues.

Belongs to the membrane fusion protein (MFP) (TC 8.A.1) family. Part of a tripartite efflux system composed of MdtA, MdtB and MdtC.

It is found in the cell inner membrane. In terms of biological role, the MdtABC tripartite complex confers resistance against novobiocin and deoxycholate. The sequence is that of Multidrug resistance protein MdtA from Escherichia coli O6:H1 (strain CFT073 / ATCC 700928 / UPEC).